An 80-amino-acid polypeptide reads, in one-letter code: uncharacterized protein (80 aa).

Positions 1 to 20 (MVAADHRALGSNKSYPASQT) are cleaved as a signal peptide. The interval 1–21 (MVAADHRALGSNKSYPASQTA) is disordered. Residues 11–21 (SNKSYPASQTA) are compositionally biased toward polar residues.

This is an uncharacterized protein from Mycobacterium tuberculosis (strain CDC 1551 / Oshkosh).